Here is a 156-residue protein sequence, read N- to C-terminus: Arginine repressor (156 aa).

It belongs to the ArgR family.

The protein resides in the cytoplasm. It participates in amino-acid biosynthesis; L-arginine biosynthesis [regulation]. In terms of biological role, regulates arginine biosynthesis genes. In Shewanella oneidensis (strain ATCC 700550 / JCM 31522 / CIP 106686 / LMG 19005 / NCIMB 14063 / MR-1), this protein is Arginine repressor.